A 45-amino-acid polypeptide reads, in one-letter code: Ice-structuring protein SS-8 (45 aa).

Position 1 is a blocked amino end (Met) (Met1). Repeats lie at residues 9–21 (KAAR…ALAA), 22–33 (KTAADAAAKAAA), and 34–45 (KAAAIAAAAASA).

The protein belongs to the type-I AFP family.

Its function is as follows. Antifreeze proteins lower the blood freezing point. In Myoxocephalus scorpius (Shorthorn sculpin), this protein is Ice-structuring protein SS-8.